The following is a 100-amino-acid chain: Urease subunit gamma (100 aa).

The protein belongs to the urease gamma subunit family. In terms of assembly, heterotrimer of UreA (gamma), UreB (beta) and UreC (alpha) subunits. Three heterotrimers associate to form the active enzyme.

It localises to the cytoplasm. The enzyme catalyses urea + 2 H2O + H(+) = hydrogencarbonate + 2 NH4(+). The protein operates within nitrogen metabolism; urea degradation; CO(2) and NH(3) from urea (urease route): step 1/1. The chain is Urease subunit gamma from Escherichia coli O157:H7 (strain EC4115 / EHEC).